A 403-amino-acid chain; its full sequence is Dynactin subunit 2-A (403 aa).

Positions methionine 1–proline 26 are disordered. Positions proline 99–lysine 132 form a coiled coil. The segment at alanine 183–threonine 203 is disordered. Positions lysine 381 to leucine 401 form a coiled coil.

Belongs to the dynactin subunit 2 family. Subunit of dynactin, a multiprotein complex part of a tripartite complex with dynein and a adapter, such as BICDL1, BICD2 or HOOK3. The dynactin complex is built around ACTR1A/ACTB filament and consists of an actin-related filament composed of a shoulder domain, a pointed end and a barbed end. Its length is defined by its flexible shoulder domain. The soulder is composed of 2 DCTN1 subunits, 4 DCTN2 and 2 DCTN3.

The protein localises to the cytoplasm. Its subcellular location is the cytoskeleton. It localises to the microtubule organizing center. It is found in the centrosome. The protein resides in the membrane. In terms of biological role, part of the dynactin complex that activates the molecular motor dynein for ultra-processive transport along microtubules. In the dynactin soulder domain, binds the ACTR1A filament and acts as a molecular ruler to determine the length. Modulates cytoplasmic dynein binding to an organelle, and plays a role in prometaphase chromosome alignment and spindle organization during mitosis. Involved in anchoring microtubules to centrosomes. This Xenopus laevis (African clawed frog) protein is Dynactin subunit 2-A (dctn2-a).